The primary structure comprises 276 residues: CASP-like protein 4A3 (276 aa).

The span at 1-13 (MPSMSPSSISTEK) shows a compositional bias: polar residues. The tract at residues 1-76 (MPSMSPSSIS…PVKIEETPSP (76 aa)) is disordered. The Cytoplasmic segment spans residues 1–126 (MPSMSPSSIS…RRSRREEIVK (126 aa)). Positions 43–72 (SLDHSSDSEKEDEKRRPESRRNKNPVKIEE) are enriched in basic and acidic residues. Residues 127–147 (FVALGFRLSEVVLALISFSIM) traverse the membrane as a helical segment. The Extracellular segment spans residues 148–167 (AADKTKGWSGDSFDRYKEYR). The chain crosses the membrane as a helical span at residues 168–188 (FCLSVNVVAFIYASFQACDLA). The Cytoplasmic portion of the chain corresponds to 189 to 205 (YHLVKEKHLISHHLRPL). A helical transmembrane segment spans residues 206-226 (FEFIIDQVLAYLLMCASTAAV). At 227 to 244 (TRVDDWVSNWGKDDFTEM) the chain is on the extracellular side. A helical membrane pass occupies residues 245–265 (ASASIAMSFLTFLAFAFSSLI). Topologically, residues 266-276 (SGYNLFNQDSL) are cytoplasmic.

Belongs to the Casparian strip membrane proteins (CASP) family. In terms of assembly, homodimer and heterodimers.

Its subcellular location is the cell membrane. The polypeptide is CASP-like protein 4A3 (Arabidopsis lyrata subsp. lyrata (Lyre-leaved rock-cress)).